We begin with the raw amino-acid sequence, 319 residues long: Transmembrane and ubiquitin-like domain-containing protein 2 (319 aa).

A helical membrane pass occupies residues 36-56 (VMVVAGVVVLTLALVLAWLST). Disordered stretches follow at residues 88-130 (VNQG…GDME) and 146-165 (QAGL…DSTC). Residues 95-111 (PTEHPHPSGGSDDKAEE) show a composition bias toward basic and acidic residues. Residues 173-246 (INVRLKFLND…IHCHRSPPGA (74 aa)) form the Ubiquitin-like domain. 2 helical membrane passes run 264-284 (LGVN…GVVW) and 293-313 (FFTA…SFLV).

The protein resides in the membrane. In Rattus norvegicus (Rat), this protein is Transmembrane and ubiquitin-like domain-containing protein 2 (Tmub2).